A 100-amino-acid chain; its full sequence is Small ribosomal subunit protein bS20 (100 aa).

Over residues methionine 1–glutamine 22 the composition is skewed to basic residues. A disordered region spans residues methionine 1 to leucine 26.

It belongs to the bacterial ribosomal protein bS20 family.

Its function is as follows. Binds directly to 16S ribosomal RNA. The protein is Small ribosomal subunit protein bS20 of Acidovorax ebreus (strain TPSY) (Diaphorobacter sp. (strain TPSY)).